Consider the following 208-residue polypeptide: Receptor expression-enhancing protein 6 (208 aa).

3 consecutive transmembrane segments (helical) span residues 49 to 69 (GAFLLLGYGASLICNLIGFVY), 93 to 113 (WVIYGFFSVGEFFSDIFLHWF), and 115 to 135 (FYYVCKCLFLLWCMAPVSWNG). A disordered region spans residues 187 to 208 (VGPAESEPRSLPSSAHTEPTVD). Residues 197 to 208 (LPSSAHTEPTVD) are compositionally biased toward polar residues.

It belongs to the DP1 family.

It localises to the endoplasmic reticulum membrane. The protein localises to the cytoplasmic vesicle. Its subcellular location is the clathrin-coated vesicle membrane. Its function is as follows. Required correct function and survival of retinal photoreceptors. Required for retinal development. In rod photoreceptors, facilitates stability and/or trafficking of guanylate cyclases and is required to maintain endoplasmic reticulum and mitochondrial homeostasis. May play a role in clathrin-coated intracellular vesicle trafficking of proteins from the endoplasmic reticulum to the retinal rod plasma membrane. This is Receptor expression-enhancing protein 6 from Danio rerio (Zebrafish).